A 380-amino-acid polypeptide reads, in one-letter code: SAM and SH3 domain-containing protein 3 (380 aa).

The tract at residues 1 to 76 (MLRRKPSNAS…KSGKKLGKKW (76 aa)) is disordered. Low complexity predominate over residues 22–41 (LQRSSSFKDFAKSKPSSPVV). Phosphoserine is present on residues S27, S34, and S42. T61 is modified (phosphothreonine). Phosphoserine is present on S97. Disordered stretches follow at residues 98 to 174 (EEMA…TGPF), 237 to 256 (VGHA…KPKT), and 318 to 380 (TGSE…AGAP). T103 carries the post-translational modification Phosphothreonine. S110 is modified (phosphoserine). The residue at position 112 (T112) is a Phosphothreonine. S113 carries the post-translational modification Phosphoserine. Position 116 is a phosphotyrosine (Y116). The residue at position 120 (S120) is a Phosphoserine. Polar residues predominate over residues 143-152 (RQASTGSELC). Residues 153-164 (SPSPGSGSFGEE) show a composition bias toward low complexity. The 62-residue stretch at 173 to 234 (PFCGRARVHT…KFIYVDVLPE (62 aa)) folds into the SH3 domain. Residues 241–255 (RPSRRQSKGKRPKPK) are compositionally biased toward basic residues. The 65-residue stretch at 252–316 (PKPKTLHELL…LTAAELLLDY (65 aa)) folds into the SAM domain. Phosphothreonine is present on T318. Positions 318-327 (TGSEEAEEGA) are enriched in acidic residues. S320 carries the phosphoserine modification.

In terms of biological role, may function as a signaling adapter protein in lymphocytes. This Homo sapiens (Human) protein is SAM and SH3 domain-containing protein 3 (SASH3).